Consider the following 426-residue polypeptide: Chordin-like protein 2 (426 aa).

Residues 1 to 25 form the signal peptide; that stretch reads MVPGVRIIPSLLGLVMFWLPLDSQA. VWFC domains lie at 31 to 96 and 109 to 175; these read KVCL…PRCV and KSCQ…QTCK. Asparagine 114 carries N-linked (GlcNAc...) asparagine glycosylation. Serine 182 bears the Phosphoserine mark. Residues 182–191 are compositionally biased toward polar residues; sequence STEENLTQLQ. The disordered stretch occupies residues 182–216; it reads STEENLTQLQHGERHSQDPCSERRGPSTPAPTSLS. A glycan (N-linked (GlcNAc...) asparagine) is linked at asparagine 186. The span at 192 to 206 shows a compositional bias: basic and acidic residues; sequence HGERHSQDPCSERRG. Residues 207-216 show a composition bias toward low complexity; that stretch reads PSTPAPTSLS. The 66-residue stretch at 246–311 folds into the VWFC 3 domain; it reads KACTHNGKTY…VAGKCCKICP (66 aa).

Interacts with GDF5. May interact with INHBA, BMP2, BMP4, BMP5, BMP6, and BMP7. As to expression, weakly expressed in the liver and kidney. In reproductive organs expressed in connective tissues such as ligaments of the ovary and oviduct in females, and of testis, epididymis and certain male accessory sex glands in males. Expression was high in uterine myometrium. Weakly expressed in cartilage of the femoral head, patella, articular facets of vertebrae, in the annulus fibrosus of intervertebral disks. In normal cartilage, expression was confined to articular chondrocytes especially in the superficial zone.

It localises to the secreted. Implicated in tumor angiogenesis. May inhibits BMPs activity by blocking their interaction with their receptors. Has a negative regulator effect on the cartilage formation/regeneration from immature mesenchymal cells, by preventing or reducing the rate of matrix accumulation. May play a role during myoblast and osteoblast differentiation, and maturation. The protein is Chordin-like protein 2 (Chrdl2) of Mus musculus (Mouse).